Consider the following 137-residue polypeptide: Large ribosomal subunit protein uL16 (137 aa).

A compositionally biased stretch (basic residues) spans 1–14; that stretch reads MLQPNRRKFRKEHK. Residues 1-22 are disordered; the sequence is MLQPNRRKFRKEHKGRNEGLAT.

This sequence belongs to the universal ribosomal protein uL16 family. Part of the 50S ribosomal subunit.

In terms of biological role, binds 23S rRNA and is also seen to make contacts with the A and possibly P site tRNAs. This is Large ribosomal subunit protein uL16 from Dechloromonas aromatica (strain RCB).